The following is a 926-amino-acid chain: ABC transporter A family member 6 (926 aa).

The next 6 membrane-spanning stretches (helical) occupy residues 34–54 (LIVI…VFDS), 336–356 (ASLI…PVIL), 389–409 (FLAI…AIGL), 418–438 (TIQF…AFLV), 451–471 (VAYI…QFLI), and 525–545 (DEVF…TYYI). Residues 610–847 (IVCDNLKKVY…YGGSYVLTIT (238 aa)) enclose the ABC transporter domain. Residue 648–655 (GPNGAGKT) coordinates ATP.

This sequence belongs to the ABC transporter superfamily. ABCA family. CPR flippase (TC 3.A.1.211) subfamily.

It localises to the membrane. This Arabidopsis thaliana (Mouse-ear cress) protein is ABC transporter A family member 6 (ABCA6).